A 211-amino-acid chain; its full sequence is Thiamine-phosphate synthase (211 aa).

Residues 37–41 (QLRIK) and asparagine 69 each bind 4-amino-2-methyl-5-(diphosphooxymethyl)pyrimidine. Residues aspartate 70 and aspartate 89 each coordinate Mg(2+). Position 108 (serine 108) interacts with 4-amino-2-methyl-5-(diphosphooxymethyl)pyrimidine. A 2-[(2R,5Z)-2-carboxy-4-methylthiazol-5(2H)-ylidene]ethyl phosphate-binding site is contributed by 134-136 (TQT). Lysine 137 lines the 4-amino-2-methyl-5-(diphosphooxymethyl)pyrimidine pocket. Residues glycine 166 and 186–187 (VS) contribute to the 2-[(2R,5Z)-2-carboxy-4-methylthiazol-5(2H)-ylidene]ethyl phosphate site.

The protein belongs to the thiamine-phosphate synthase family. Mg(2+) is required as a cofactor.

The enzyme catalyses 2-[(2R,5Z)-2-carboxy-4-methylthiazol-5(2H)-ylidene]ethyl phosphate + 4-amino-2-methyl-5-(diphosphooxymethyl)pyrimidine + 2 H(+) = thiamine phosphate + CO2 + diphosphate. It catalyses the reaction 2-(2-carboxy-4-methylthiazol-5-yl)ethyl phosphate + 4-amino-2-methyl-5-(diphosphooxymethyl)pyrimidine + 2 H(+) = thiamine phosphate + CO2 + diphosphate. It carries out the reaction 4-methyl-5-(2-phosphooxyethyl)-thiazole + 4-amino-2-methyl-5-(diphosphooxymethyl)pyrimidine + H(+) = thiamine phosphate + diphosphate. The protein operates within cofactor biosynthesis; thiamine diphosphate biosynthesis; thiamine phosphate from 4-amino-2-methyl-5-diphosphomethylpyrimidine and 4-methyl-5-(2-phosphoethyl)-thiazole: step 1/1. Condenses 4-methyl-5-(beta-hydroxyethyl)thiazole monophosphate (THZ-P) and 2-methyl-4-amino-5-hydroxymethyl pyrimidine pyrophosphate (HMP-PP) to form thiamine monophosphate (TMP). This is Thiamine-phosphate synthase from Enterobacter sp. (strain 638).